The primary structure comprises 490 residues: Betaine aldehyde dehydrogenase (490 aa).

Positions 26, 27, and 93 each coordinate K(+). Position 150–152 (150–152) interacts with NAD(+); it reads GAW. Lysine 162 functions as the Charge relay system in the catalytic mechanism. NAD(+) is bound at residue 176-179; it reads KPSE. Residue valine 180 participates in K(+) binding. Residue 230 to 233 participates in NAD(+) binding; that stretch reads GVAS. Leucine 246 serves as a coordination point for K(+). Glutamate 252 serves as the catalytic Proton acceptor. NAD(+) contacts are provided by glycine 254, cysteine 286, and glutamate 387. Cysteine 286 serves as the catalytic Nucleophile. Cysteine 286 bears the Cysteine sulfenic acid (-SOH) mark. Lysine 457 and glycine 460 together coordinate K(+). Catalysis depends on glutamate 464, which acts as the Charge relay system.

This sequence belongs to the aldehyde dehydrogenase family. Dimer of dimers. K(+) serves as cofactor.

It catalyses the reaction betaine aldehyde + NAD(+) + H2O = glycine betaine + NADH + 2 H(+). The protein operates within amine and polyamine biosynthesis; betaine biosynthesis via choline pathway; betaine from betaine aldehyde: step 1/1. In terms of biological role, involved in the biosynthesis of the osmoprotectant glycine betaine. Catalyzes the irreversible oxidation of betaine aldehyde to the corresponding acid. This is Betaine aldehyde dehydrogenase from Escherichia coli (strain 55989 / EAEC).